We begin with the raw amino-acid sequence, 975 residues long: Translation initiation factor IF-2 (975 aa).

Positions 48–63 (DHLRKSHGATDGDKRK) are enriched in basic and acidic residues. 2 disordered regions span residues 48–84 (DHLRKSHGATDGDKRKITLTRRHTSEIKQADATGKAR) and 98–388 (KRDD…QAPT). Residues 104 to 115 (ETGADQAQAQTD) show a composition bias toward low complexity. The span at 120-177 (AELKRREEEARREAELLEKQAQELRERQERLEREEAERRAREEAAEAERRRAEEEAAA) shows a compositional bias: basic and acidic residues. Residues 178-211 (KRAAAAQAEAAQQAAAAREQAQRAQSEPAEQSAQ) are compositionally biased toward low complexity. Basic and acidic residues predominate over residues 212-263 (DEARAAAERAAQREAAKKAEDAAREAADKARAEQEEIRKRREAAEAEARAIR). The span at 302-330 (KPAGEAAAARPAAKKPASGAPAPAAAPAG) shows a compositional bias: low complexity. Gly residues predominate over residues 359-372 (SSGGVDRGWRGGPK). A tr-type G domain is found at 475–644 (PRPPVVTVMG…LLQAEVLELK (170 aa)). The tract at residues 484 to 491 (GHVDHGKT) is G1. 484 to 491 (GHVDHGKT) serves as a coordination point for GTP. The interval 509-513 (GITQH) is G2. Residues 530 to 533 (DTPG) form a G3 region. GTP contacts are provided by residues 530–534 (DTPGH) and 584–587 (NKID). Positions 584-587 (NKID) are G4. The G5 stretch occupies residues 620–622 (SAK).

It belongs to the TRAFAC class translation factor GTPase superfamily. Classic translation factor GTPase family. IF-2 subfamily.

The protein resides in the cytoplasm. Its function is as follows. One of the essential components for the initiation of protein synthesis. Protects formylmethionyl-tRNA from spontaneous hydrolysis and promotes its binding to the 30S ribosomal subunits. Also involved in the hydrolysis of GTP during the formation of the 70S ribosomal complex. In Burkholderia mallei (strain NCTC 10247), this protein is Translation initiation factor IF-2.